The primary structure comprises 216 residues: Putative transmembrane protein RNF32-DT (216 aa).

The chain crosses the membrane as a helical span at residues Trp177–Val197.

In terms of tissue distribution, expressed only in testis.

The protein localises to the cytoplasm. It localises to the membrane. This Homo sapiens (Human) protein is Putative transmembrane protein RNF32-DT.